The following is a 563-amino-acid chain: MVSKSLFLAAAVNLAGVLAQAPRPSLNGNEVISGVLEGKVDTFKGIPFADPPLNDLRFKHPQPFTGSYQGLKANDFSPACMQLDPGNSLTLLDKALGLAKVIPEEFRGPLYDMAKGTVSMNEDCLYLNVFRPAGTKPDAKLPVMVWIYGGAFVYGSSAAYPGNSYVKESINMGQPVVFVSINYRTGPFGFLGGDAITAEGNTNAGLHDQRKGLEWVSDNIANFGGDPDKVMIFGESAGAMSVAHQLIAYGGDNTYNGKKLFHSAILQSGGPLPYHDSSSVGPDISYNRFAQYAGCDTSASANDTLECLRSKSSSVLHDAQNSYDLKDLFGLLPQFLGFGPRPDGNIIPDAAYELFRSGRYAKVPYISGNQEDEGTAFAPVALNATTTPHVKKWLQYIFYDASEASIDRVLSLYPQTLSVGSPFRTGILNALTPQFKRVAAILSDMLFQSPRRVMLSATKDVNRWTYLSTHLHNLVPFLGTFHGNELIFQFNVNIGPANSYLRYFISFANHHDPNVGTNLLQWDQYTDEGKEMLEIHMTDNVMRTDDYRIEGISNFETDVNLYG.

The N-terminal stretch at 1–19 (MVSKSLFLAAAVNLAGVLA) is a signal peptide. Glutamine 20 carries the post-translational modification Pyrrolidone carboxylic acid. Residues cysteine 80 and cysteine 124 are joined by a disulfide bond. Serine 236 (acyl-ester intermediate) is an active-site residue. Cysteine 295 and cysteine 307 are disulfide-bonded. The N-linked (GlcNAc...) asparagine glycan is linked to asparagine 302. The active-site Charge relay system is the glutamate 373. Asparagine 383 carries N-linked (GlcNAc...) asparagine glycosylation. Histidine 482 acts as the Charge relay system in catalysis.

The protein belongs to the type-B carboxylesterase/lipase family. As to quaternary structure, monomer.

It is found in the secreted. It carries out the reaction a triacylglycerol + H2O = a diacylglycerol + a fatty acid + H(+). In terms of biological role, hydrolyzes all ester bonds in triglyceride and displays a high affinity for triolein. For unsaturated substrates having long fatty acyl chains (C18:2 cis-9, cis-12 and C18:3 cis-9, cis-12, cis-15) GCL I shows higher specific activity than GCL II, whereas GCL II shows higher specific activity against saturated substrates having short fatty acid chains (C8, C10, C12 and C14). The polypeptide is Lipase 2 (LIP2) (Geotrichum candidum (Oospora lactis)).